Consider the following 557-residue polypeptide: Trigger factor (557 aa).

The PPIase FKBP-type domain maps to 169-255; that stretch reads GDVVVIDFQA…LKEIKTKELP (87 aa). The interval 438-557 is disordered; that stretch reads WVDSEGNPTE…KAGKKSKKDK (120 aa). The segment covering 455–466 has biased composition (basic and acidic residues); it reads SEGEDRQERSES.

This sequence belongs to the FKBP-type PPIase family. Tig subfamily.

The protein resides in the cytoplasm. The catalysed reaction is [protein]-peptidylproline (omega=180) = [protein]-peptidylproline (omega=0). Involved in protein export. Acts as a chaperone by maintaining the newly synthesized protein in an open conformation. Functions as a peptidyl-prolyl cis-trans isomerase. The sequence is that of Trigger factor from Synechococcus sp. (strain JA-3-3Ab) (Cyanobacteria bacterium Yellowstone A-Prime).